Consider the following 143-residue polypeptide: 3-hydroxyacyl-[acyl-carrier-protein] dehydratase FabZ (143 aa).

H47 is an active-site residue.

The protein belongs to the thioester dehydratase family. FabZ subfamily.

Its subcellular location is the cytoplasm. The enzyme catalyses a (3R)-hydroxyacyl-[ACP] = a (2E)-enoyl-[ACP] + H2O. Involved in unsaturated fatty acids biosynthesis. Catalyzes the dehydration of short chain beta-hydroxyacyl-ACPs and long chain saturated and unsaturated beta-hydroxyacyl-ACPs. This Rickettsia canadensis (strain McKiel) protein is 3-hydroxyacyl-[acyl-carrier-protein] dehydratase FabZ.